A 248-amino-acid chain; its full sequence is Triosephosphate isomerase (248 aa).

11–13 (NWK) provides a ligand contact to substrate. H95 acts as the Electrophile in catalysis. The active-site Proton acceptor is the E167. Residues G173, S212, and 233–234 (GG) contribute to the substrate site.

Belongs to the triosephosphate isomerase family. In terms of assembly, homodimer.

The protein resides in the cytoplasm. The enzyme catalyses D-glyceraldehyde 3-phosphate = dihydroxyacetone phosphate. Its pathway is carbohydrate biosynthesis; gluconeogenesis. It functions in the pathway carbohydrate degradation; glycolysis; D-glyceraldehyde 3-phosphate from glycerone phosphate: step 1/1. Involved in the gluconeogenesis. Catalyzes stereospecifically the conversion of dihydroxyacetone phosphate (DHAP) to D-glyceraldehyde-3-phosphate (G3P). The protein is Triosephosphate isomerase of Ralstonia nicotianae (strain ATCC BAA-1114 / GMI1000) (Ralstonia solanacearum).